Consider the following 130-residue polypeptide: Small ribosomal subunit protein uS8 (130 aa).

Belongs to the universal ribosomal protein uS8 family.

This is Small ribosomal subunit protein uS8 (RPS22) from Candida glabrata (strain ATCC 2001 / BCRC 20586 / JCM 3761 / NBRC 0622 / NRRL Y-65 / CBS 138) (Yeast).